We begin with the raw amino-acid sequence, 239 residues long: Ribosomal RNA small subunit methyltransferase G (239 aa).

S-adenosyl-L-methionine-binding positions include glycine 78, phenylalanine 83, 129–130 (AE), and arginine 148.

This sequence belongs to the methyltransferase superfamily. RNA methyltransferase RsmG family.

The protein localises to the cytoplasm. Functionally, specifically methylates the N7 position of a guanine in 16S rRNA. The chain is Ribosomal RNA small subunit methyltransferase G from Clostridium botulinum (strain Okra / Type B1).